Consider the following 295-residue polypeptide: Beta-lactamase-like protein 2 homolog (295 aa).

Zn(2+) contacts are provided by H79, H81, D83, H84, H141, D160, and H195.

It belongs to the metallo-beta-lactamase superfamily. Glyoxalase II family.

This is Beta-lactamase-like protein 2 homolog from Caenorhabditis elegans.